The primary structure comprises 85 residues: Large ribosomal subunit protein bL27 (85 aa).

The interval M1–L21 is disordered.

This sequence belongs to the bacterial ribosomal protein bL27 family.

The protein is Large ribosomal subunit protein bL27 of Pseudomonas entomophila (strain L48).